Consider the following 388-residue polypeptide: Phosphopentomutase (388 aa).

Mn(2+)-binding residues include aspartate 11, aspartate 283, histidine 288, aspartate 324, histidine 325, and histidine 336.

It belongs to the phosphopentomutase family. It depends on Mn(2+) as a cofactor.

The protein resides in the cytoplasm. The enzyme catalyses 2-deoxy-alpha-D-ribose 1-phosphate = 2-deoxy-D-ribose 5-phosphate. It catalyses the reaction alpha-D-ribose 1-phosphate = D-ribose 5-phosphate. The protein operates within carbohydrate degradation; 2-deoxy-D-ribose 1-phosphate degradation; D-glyceraldehyde 3-phosphate and acetaldehyde from 2-deoxy-alpha-D-ribose 1-phosphate: step 1/2. Isomerase that catalyzes the conversion of deoxy-ribose 1-phosphate (dRib-1-P) and ribose 1-phosphate (Rib-1-P) to deoxy-ribose 5-phosphate (dRib-5-P) and ribose 5-phosphate (Rib-5-P), respectively. This Anaeromyxobacter dehalogenans (strain 2CP-1 / ATCC BAA-258) protein is Phosphopentomutase.